The sequence spans 524 residues: Cytochrome P450 1A1 (524 aa).

The mitochondrial targeting signal stretch occupies residues 33 to 44; it reads WQPRLPKGLKSP. Ser-71 is a glycosylation site (O-linked (GlcNAc) serine). Residue Phe-228 participates in substrate binding. Cys-461 contacts heme.

It belongs to the cytochrome P450 family. In terms of assembly, interacts with cytosolic chaperones HSP70 and HSP90; this interaction is required for initial targeting to mitochondria. Interacts (via mitochondrial targeting signal) with TOMM40 (via N-terminus); this interaction is required for translocation across the mitochondrial outer membrane. It depends on heme as a cofactor.

The protein resides in the endoplasmic reticulum membrane. Its subcellular location is the mitochondrion inner membrane. The protein localises to the microsome membrane. It localises to the cytoplasm. The catalysed reaction is an organic molecule + reduced [NADPH--hemoprotein reductase] + O2 = an alcohol + oxidized [NADPH--hemoprotein reductase] + H2O + H(+). It catalyses the reaction estrone + reduced [NADPH--hemoprotein reductase] + O2 = 2-hydroxyestrone + oxidized [NADPH--hemoprotein reductase] + H2O + H(+). The enzyme catalyses estrone + reduced [NADPH--hemoprotein reductase] + O2 = 4-hydroxyestrone + oxidized [NADPH--hemoprotein reductase] + H2O + H(+). It carries out the reaction estrone + reduced [NADPH--hemoprotein reductase] + O2 = 6alpha-hydroxyestrone + oxidized [NADPH--hemoprotein reductase] + H2O + H(+). The catalysed reaction is estrone + reduced [NADPH--hemoprotein reductase] + O2 = 15alpha-hydroxyestrone + oxidized [NADPH--hemoprotein reductase] + H2O + H(+). It catalyses the reaction estrone + reduced [NADPH--hemoprotein reductase] + O2 = 16alpha-hydroxyestrone + oxidized [NADPH--hemoprotein reductase] + H2O + H(+). The enzyme catalyses 17beta-estradiol + reduced [NADPH--hemoprotein reductase] + O2 = 2-hydroxy-17beta-estradiol + oxidized [NADPH--hemoprotein reductase] + H2O + H(+). It carries out the reaction 17beta-estradiol + reduced [NADPH--hemoprotein reductase] + O2 = 4-hydroxy-17beta-estradiol + oxidized [NADPH--hemoprotein reductase] + H2O + H(+). The catalysed reaction is 17beta-estradiol + reduced [NADPH--hemoprotein reductase] + O2 = 6alpha-hydroxy-17beta-estradiol + oxidized [NADPH--hemoprotein reductase] + H2O + H(+). It catalyses the reaction 17beta-estradiol + reduced [NADPH--hemoprotein reductase] + O2 = 7alpha-hydroxy-17beta-estradiol + oxidized [NADPH--hemoprotein reductase] + H2O + H(+). The enzyme catalyses 17beta-estradiol + reduced [NADPH--hemoprotein reductase] + O2 = 15alpha-hydroxy-17beta-estradiol + oxidized [NADPH--hemoprotein reductase] + H2O + H(+). It carries out the reaction (5Z,8Z,11Z)-eicosatrienoate + reduced [NADPH--hemoprotein reductase] + O2 = 19-hydroxy-(5Z,8Z,11Z)-eicosatrienoate + oxidized [NADPH--hemoprotein reductase] + H2O + H(+). The catalysed reaction is (5Z,8Z,11Z,14Z)-eicosatetraenoate + reduced [NADPH--hemoprotein reductase] + O2 = 16-hydroxy-(5Z,8Z,11Z,14Z)-eicosatetraenoate + oxidized [NADPH--hemoprotein reductase] + H2O + H(+). It catalyses the reaction (5Z,8Z,11Z,14Z)-eicosatetraenoate + reduced [NADPH--hemoprotein reductase] + O2 = 17-hydroxy-(5Z,8Z,11Z,14Z)-eicosatetraenoate + oxidized [NADPH--hemoprotein reductase] + H2O + H(+). The enzyme catalyses (5Z,8Z,11Z,14Z)-eicosatetraenoate + reduced [NADPH--hemoprotein reductase] + O2 = 18-hydroxy-(5Z,8Z,11Z,14Z)-eicosatetraenoate + oxidized [NADPH--hemoprotein reductase] + H2O + H(+). It carries out the reaction (5Z,8Z,11Z,14Z)-eicosatetraenoate + reduced [NADPH--hemoprotein reductase] + O2 = 19-hydroxy-(5Z,8Z,11Z,14Z)-eicosatetraenoate + oxidized [NADPH--hemoprotein reductase] + H2O + H(+). The catalysed reaction is (5Z,8Z,11Z,14Z,17Z)-eicosapentaenoate + reduced [NADPH--hemoprotein reductase] + O2 = 19-hydroxy-(5Z,8Z,11Z,14Z,17Z)-eicosapentaenoate + oxidized [NADPH--hemoprotein reductase] + H2O + H(+). It catalyses the reaction (5Z,8Z,11Z,14Z)-eicosatetraenoate + reduced [NADPH--hemoprotein reductase] + O2 = (8R,9S)-epoxy-(5Z,11Z,14Z)-eicosatrienoate + oxidized [NADPH--hemoprotein reductase] + H2O + H(+). The enzyme catalyses (5Z,8Z,11Z,14Z)-eicosatetraenoate + reduced [NADPH--hemoprotein reductase] + O2 = (11R,12S)-epoxy-(5Z,8Z,14Z)-eicosatrienoate + oxidized [NADPH--hemoprotein reductase] + H2O + H(+). It carries out the reaction (5Z,8Z,11Z,14Z)-eicosatetraenoate + reduced [NADPH--hemoprotein reductase] + O2 = (14S,15R)-epoxy-(5Z,8Z,11Z)-eicosatrienoate + oxidized [NADPH--hemoprotein reductase] + H2O + H(+). The catalysed reaction is (5Z,8Z,11Z,14Z)-eicosatetraenoate + reduced [NADPH--hemoprotein reductase] + O2 = (14R,15S)-epoxy-(5Z,8Z,11Z)-eicosatrienoate + oxidized [NADPH--hemoprotein reductase] + H2O + H(+). It catalyses the reaction (5Z,8Z,11Z,14Z,17Z)-eicosapentaenoate + reduced [NADPH--hemoprotein reductase] + O2 = (17R,18S)-epoxy-(5Z,8Z,11Z,14Z)-eicosatetraenoate + oxidized [NADPH--hemoprotein reductase] + H2O + H(+). The enzyme catalyses (4Z,7Z,10Z,13Z,16Z,19Z)-docosahexaenoate + reduced [NADPH--hemoprotein reductase] + O2 = (19S,20R)-epoxy-(4Z,7Z,10Z,13Z,16Z)-docosapentaenoate + oxidized [NADPH--hemoprotein reductase] + H2O + H(+). It carries out the reaction (4Z,7Z,10Z,13Z,16Z,19Z)-docosahexaenoate + reduced [NADPH--hemoprotein reductase] + O2 = (19R,20S)-epoxy-(4Z,7Z,10Z,13Z,16Z)-docosapentaenoate + oxidized [NADPH--hemoprotein reductase] + H2O + H(+). The catalysed reaction is all-trans-retinol + reduced [NADPH--hemoprotein reductase] + O2 = all-trans-retinal + oxidized [NADPH--hemoprotein reductase] + 2 H2O + H(+). It catalyses the reaction all-trans-retinal + reduced [NADPH--hemoprotein reductase] + O2 = all-trans-retinoate + oxidized [NADPH--hemoprotein reductase] + H2O + 2 H(+). The enzyme catalyses (13S)-hydroperoxy-(9Z,11E)-octadecadienoate = 13-oxo-(9Z,11E)-octadecadienoate + H2O. It carries out the reaction (12S)-hydroperoxy-(5Z,8Z,10E,14Z)-eicosatetraenoate = 12-oxo-(5Z,8Z,10E,14Z)-eicosatetraenoate + H2O. The catalysed reaction is (15S)-hydroperoxy-(5Z,8Z,11Z,13E)-eicosatetraenoate = 15-oxo-(5Z,8Z,11Z,13E)-eicosatetraenoate + H2O. It catalyses the reaction (5S)-hydroperoxy-(6E,8Z,11Z,14Z)-eicosatetraenoate = 5-oxo-(6E,8Z,11Z,14Z)-eicosatetraenoate + H2O. The protein operates within steroid hormone biosynthesis. It participates in lipid metabolism; fatty acid metabolism. Its pathway is cofactor metabolism; retinol metabolism. In terms of biological role, a cytochrome P450 monooxygenase involved in the metabolism of various endogenous substrates, including fatty acids, steroid hormones and vitamins. Mechanistically, uses molecular oxygen inserting one oxygen atom into a substrate, and reducing the second into a water molecule, with two electrons provided by NADPH via cytochrome P450 reductase (CPR; NADPH-ferrihemoprotein reductase). Catalyzes the hydroxylation of carbon-hydrogen bonds. Exhibits high catalytic activity for the formation of hydroxyestrogens from estrone (E1) and 17beta-estradiol (E2), namely 2-hydroxy E1 and E2, as well as D-ring hydroxylated E1 and E2 at the C15alpha and C16alpha positions. Displays different regioselectivities for polyunsaturated fatty acids (PUFA) hydroxylation. Catalyzes the epoxidation of double bonds of certain PUFA. Converts arachidonic acid toward epoxyeicosatrienoic acid (EET) regioisomers, 8,9-, 11,12-, and 14,15-EET, that function as lipid mediators in the vascular system. Displays an absolute stereoselectivity in the epoxidation of eicosapentaenoic acid (EPA) producing the 17(R),18(S) enantiomer. May play an important role in all-trans retinoic acid biosynthesis in extrahepatic tissues. Catalyzes two successive oxidative transformation of all-trans retinol to all-trans retinal and then to the active form all-trans retinoic acid. May also participate in eicosanoids metabolism by converting hydroperoxide species into oxo metabolites (lipoxygenase-like reaction, NADPH-independent). The protein is Cytochrome P450 1A1 (CYP1A1) of Canis lupus familiaris (Dog).